We begin with the raw amino-acid sequence, 118 residues long: Na(+)/H(+) antiporter subunit G1 (118 aa).

Transmembrane regions (helical) follow at residues 9-29, 47-67, and 69-89; these read LAVI…IGII, LGAI…DGYI, and MQLI…SHLI.

The protein belongs to the CPA3 antiporters (TC 2.A.63) subunit G family. In terms of assembly, may form a heterooligomeric complex that consists of seven subunits: mnhA1, mnhB1, mnhC1, mnhD1, mnhE1, mnhF1 and mnhG1.

Its subcellular location is the cell membrane. Mnh complex is a Na(+)/H(+) antiporter involved in Na(+) excretion. The polypeptide is Na(+)/H(+) antiporter subunit G1 (mnhG1) (Staphylococcus haemolyticus (strain JCSC1435)).